The sequence spans 1265 residues: Topoisomerase 1-associated factor 1 (1265 aa).

Positions 650 to 659 are enriched in polar residues; it reads DVNGNKNGQD. 3 disordered regions span residues 650 to 670, 1019 to 1052, and 1167 to 1226; these read DVNGNKNGQDTTRDADEDAIS, GKQIPRGTAKKRSAIKPKSRKSQPTGIGGIDDDT, and HLSL…DPPS. A compositionally biased stretch (basic residues) spans 1026–1039; it reads TAKKRSAIKPKSRK. Low complexity-rich tracts occupy residues 1171-1188 and 1201-1211; these read SPNNENNSAHSSENLSSD and SDSEYNSSNSS.

This sequence belongs to the timeless family. Component of the fork protection complex (FPC) consisting of TOF1 and CSM3.

The protein localises to the nucleus. Its function is as follows. Forms a fork protection complex (FPC) with CSM3 and which is required for chromosome segregation during meiosis and DNA damage repair. FPC coordinates leading and lagging strand synthesis and moves with the replication fork. FPC stabilizes replication forks in a configuration that is recognized by replication checkpoint sensors. The polypeptide is Topoisomerase 1-associated factor 1 (TOF1) (Eremothecium gossypii (strain ATCC 10895 / CBS 109.51 / FGSC 9923 / NRRL Y-1056) (Yeast)).